The following is a 144-amino-acid chain: Ribosomal RNA large subunit methyltransferase H (144 aa).

S-adenosyl-L-methionine contacts are provided by residues Leu68, Gly96, and 112–117 (FSKLTF).

Belongs to the RNA methyltransferase RlmH family. In terms of assembly, homodimer.

It localises to the cytoplasm. The enzyme catalyses pseudouridine(1915) in 23S rRNA + S-adenosyl-L-methionine = N(3)-methylpseudouridine(1915) in 23S rRNA + S-adenosyl-L-homocysteine + H(+). Functionally, specifically methylates the pseudouridine at position 1915 (m3Psi1915) in 23S rRNA. The protein is Ribosomal RNA large subunit methyltransferase H of Mycoplasmopsis synoviae (strain 53) (Mycoplasma synoviae).